The chain runs to 254 residues: Small ribosomal subunit protein uS2 (254 aa).

The protein belongs to the universal ribosomal protein uS2 family.

This chain is Small ribosomal subunit protein uS2, found in Brucella ovis (strain ATCC 25840 / 63/290 / NCTC 10512).